Reading from the N-terminus, the 1326-residue chain is Coiled-coil domain-containing protein 171 (1326 aa).

Coiled-coil stretches lie at residues 53 to 294 (TTKH…RAAH), 323 to 391 (AEAV…RLQY), 450 to 561 (SFSV…AFHK), 597 to 630 (SELC…ICKN), 660 to 707 (WHRQ…EQLV), 765 to 792 (FKLE…MKKK), 979 to 1143 (FTQR…KECV), and 1217 to 1241 (IMTL…LHTA). Positions 1306–1326 (SSHSSPVTMSANANRPTQIGL) are disordered.

This Homo sapiens (Human) protein is Coiled-coil domain-containing protein 171 (CCDC171).